Consider the following 530-residue polypeptide: MEQARPIRRALLSVSDKTGILEFAKALNERGVALLSTGGTAKLLADAGLPVTEVSDYTGFPEMMDGRVKTLHPKVHGGILGRREQDDAIMAQHAISPIDMVVVNLYPFAATVAKPGCTLADAVENIDIGGPTMVRSAAKNHKDVAIVVKAADYDRVIREMDGNGNSLKLATRFDLAIAAFEHTAAYDGMIANYFGTMVPSYGDNKEGDEESRFPRTFNSQFIKKQDMRYGENSHQAAAFYAEEQAAPGSVASAIQLQGKALSYNNIADTDAALECVKEFDQPACVIVKHANPCGVAIGSDLLSAYERAWQTDPTSAFGGIIAFNRELDGATAKAIVERQFVEVIIAPTVSQAARDAVAAKQNVRLLECGQWTAPAQGFDFKRVNGGLLVQERDLGMVTLGDLTVVSKRQPTEAELNDLLFCWKVAKFVKSNAIVYAKDGQTIGVGAGQMSRVYSAKIAGIKAEDEGLTVAGSVMASDAFFPFRDGIDAAAAAGISCVIQPGGSMRDQEVIDAADEHGMCMLFTNMRHFRH.

The region spanning 1–148 is the MGS-like domain; that stretch reads MEQARPIRRA…KNHKDVAIVV (148 aa).

The protein belongs to the PurH family.

The catalysed reaction is (6R)-10-formyltetrahydrofolate + 5-amino-1-(5-phospho-beta-D-ribosyl)imidazole-4-carboxamide = 5-formamido-1-(5-phospho-D-ribosyl)imidazole-4-carboxamide + (6S)-5,6,7,8-tetrahydrofolate. It carries out the reaction IMP + H2O = 5-formamido-1-(5-phospho-D-ribosyl)imidazole-4-carboxamide. It functions in the pathway purine metabolism; IMP biosynthesis via de novo pathway; 5-formamido-1-(5-phospho-D-ribosyl)imidazole-4-carboxamide from 5-amino-1-(5-phospho-D-ribosyl)imidazole-4-carboxamide (10-formyl THF route): step 1/1. It participates in purine metabolism; IMP biosynthesis via de novo pathway; IMP from 5-formamido-1-(5-phospho-D-ribosyl)imidazole-4-carboxamide: step 1/1. This chain is Bifunctional purine biosynthesis protein PurH, found in Aeromonas hydrophila subsp. hydrophila (strain ATCC 7966 / DSM 30187 / BCRC 13018 / CCUG 14551 / JCM 1027 / KCTC 2358 / NCIMB 9240 / NCTC 8049).